The chain runs to 299 residues: Tyrosine recombinase XerC (299 aa).

The region spanning 1–86 (MRNELLDFLE…AIRSLFKFLT (86 aa)) is the Core-binding (CB) domain. The Tyr recombinase domain occupies 107 to 293 (KLPEFLSIEE…NQARMTEVYN (187 aa)). Residues Arg146, Lys170, His245, Arg248, and His271 contribute to the active site. The O-(3'-phospho-DNA)-tyrosine intermediate role is filled by Tyr280.

It belongs to the 'phage' integrase family. XerC subfamily. In terms of assembly, forms a cyclic heterotetrameric complex composed of two molecules of XerC and two molecules of XerD.

Its subcellular location is the cytoplasm. Functionally, site-specific tyrosine recombinase, which acts by catalyzing the cutting and rejoining of the recombining DNA molecules. The XerC-XerD complex is essential to convert dimers of the bacterial chromosome into monomers to permit their segregation at cell division. It also contributes to the segregational stability of plasmids. In Natranaerobius thermophilus (strain ATCC BAA-1301 / DSM 18059 / JW/NM-WN-LF), this protein is Tyrosine recombinase XerC.